The primary structure comprises 389 residues: DNA damage checkpoint control protein RAD17 (389 aa).

Residues 358 to 389 form a disordered region; it reads LAPPSAFPAEETQDPDESYHPAPSNTDIPLFL. Residues 380-389 show a composition bias toward polar residues; that stretch reads PSNTDIPLFL.

The protein belongs to the rad1 family. As to quaternary structure, component of the checkpoint clamp complex composed of DDC1, MEC3 and RAD17.

It localises to the nucleus. Component of the checkpoint clamp complex involved in the surveillance mechanism that allows the DNA repair pathways to act to restore the integrity of the DNA prior to DNA synthesis or separation of the replicated chromosomes. The chain is DNA damage checkpoint control protein RAD17 (RAD17) from Eremothecium gossypii (strain ATCC 10895 / CBS 109.51 / FGSC 9923 / NRRL Y-1056) (Yeast).